We begin with the raw amino-acid sequence, 233 residues long: MCRHLGWLGAQVAVSSLVLDPPQGLRVQSYAPRRQKHGLMNADGWGVGFFDGAIPRRWRSPAPLWGDTSFHSVAPALRSHCILAAVRSATVGMPIEVSATPPFTDGHWLLAHNGVVDRAVLPAGPAAESVCDSAILAATIFAHGLDALGDTIVKVGAADPNARLNILAANGSRLIATTWGDTLSILRRADGVVLASEPYDDDSGWGDVPDRHLVEVTQKGVTLTALDRAKGPR.

C2 acts as the Nucleophile in catalysis. Residues C2–R233 enclose the Glutamine amidotransferase type-2 domain.

The catalysed reaction is gamma-L-glutamyl-hercynylcysteine S-oxide + H2O = S-(hercyn-2-yl)-L-cysteine S-oxide + L-glutamate. It participates in amino-acid biosynthesis; ergothioneine biosynthesis. Catalyzes the hydrolysis of the gamma-glutamyl amide bond of hercynyl-gamma-L-glutamyl-L-cysteine sulfoxide to produce hercynylcysteine sulfoxide, a step in the biosynthesis pathway of ergothioneine. Ergothioneine is an antioxidant that protects mycobacteria from oxidative stress. This is Gamma-glutamyl-hercynylcysteine sulfoxide hydrolase (egtC) from Mycobacterium tuberculosis (strain ATCC 25618 / H37Rv).